Here is a 472-residue protein sequence, read N- to C-terminus: Eukaryotic translation initiation factor 2 subunit 3, X-linked (472 aa).

A2 is subject to N-acetylalanine. S16 is modified (phosphoserine). Residues 39 to 248 (QATINIGTIG…IVKKIPVPPR (210 aa)) form the tr-type G domain. The tract at residues 48 to 55 (GHVAHGKS) is G1. 51–56 (AHGKST) contributes to the GTP binding site. A G2 region spans residues 76-80 (NITIK). The G3 stretch occupies residues 134-137 (DCPG). Residues 190-193 (NKID) and 225-227 (SAQ) each bind GTP. Residues 190-193 (NKID) are G4. The G5 stretch occupies residues 225 to 227 (SAQ). Positions 457–469 (GQIRRGVTIKPTV) are interacts with Cdc123.

This sequence belongs to the TRAFAC class translation factor GTPase superfamily. Classic translation factor GTPase family. EIF2G subfamily. In terms of assembly, eukaryotic translation initiation factor 2 eIF2 is a heterotrimeric complex composed of an alpha (EIF2S1), a beta (EIF2S2) and a gamma (EIF2S3) chain. eIF2 is member of the 43S pre-initiation complex (43S PIC). Interacts (via C-terminus) with CDC123; the interaction is direct. Widely expressed. In the brain, high mRNA levels are observed in specific regions, including the habenula, anterodorsal thalamic nucleus, hippocampus, hypothalamus, and cerebellum. Also expressed in the embryonic brain. There is a differential expression between males and females, which is tissue-specific. Females tend to have higher expression levels than males in the brain (cortex, hippocampus and paraventricular nucleus, but not in the habenula), as well as in other tissues. The up-regulation observed in females at the mRNA level may be due to the presence of 2 active copies of the gene.

It localises to the cytoplasm. The protein resides in the cytosol. The catalysed reaction is GTP + H2O = GDP + phosphate + H(+). Its function is as follows. Member of the eIF2 complex that functions in the early steps of protein synthesis by forming a ternary complex with GTP and initiator tRNA. This complex binds to a 40S ribosomal subunit, followed by mRNA binding to form the 43S pre-initiation complex (43S PIC). Junction of the 60S ribosomal subunit to form the 80S initiation complex is preceded by hydrolysis of the GTP bound to eIF2 and release of an eIF2-GDP binary complex. In order for eIF2 to recycle and catalyze another round of initiation, the GDP bound to eIF2 must exchange with GTP by way of a reaction catalyzed by eIF-2B. Along with its paralog on chromosome Y, may contribute to spermatogenesis up to the round spermatid stage. This is Eukaryotic translation initiation factor 2 subunit 3, X-linked (Eif2s3x) from Mus musculus (Mouse).